A 221-amino-acid polypeptide reads, in one-letter code: Thymidylate kinase (221 aa).

12–19 (GIDGAGKS) serves as a coordination point for ATP.

Belongs to the thymidylate kinase family.

It catalyses the reaction dTMP + ATP = dTDP + ADP. Its function is as follows. Phosphorylation of dTMP to form dTDP in both de novo and salvage pathways of dTTP synthesis. This chain is Thymidylate kinase, found in Paracidovorax citrulli (strain AAC00-1) (Acidovorax citrulli).